Here is a 197-residue protein sequence, read N- to C-terminus: Large ribosomal subunit protein eL15 (197 aa).

3 stretches are compositionally biased toward basic residues: residues 70–90 (PKGGRRKSRPKKGRRPKRMGK), 163–179 (RGKTGAGKKARGLRKRG), and 187–197 (PSLRAHRRRGK). 2 disordered regions span residues 70 to 99 (PKGGRRKSRPKKGRRPKRMGKNKFSPGKSK) and 163 to 197 (RGKTGAGKKARGLRKRGKGAEKVRPSLRAHRRRGK).

Belongs to the eukaryotic ribosomal protein eL15 family.

The polypeptide is Large ribosomal subunit protein eL15 (Methanopyrus kandleri (strain AV19 / DSM 6324 / JCM 9639 / NBRC 100938)).